We begin with the raw amino-acid sequence, 145 residues long: D-aminoacyl-tRNA deacylase (145 aa).

The short motif at 137 to 138 (GP) is the Gly-cisPro motif, important for rejection of L-amino acids element.

This sequence belongs to the DTD family. In terms of assembly, homodimer.

The protein localises to the cytoplasm. It carries out the reaction glycyl-tRNA(Ala) + H2O = tRNA(Ala) + glycine + H(+). The enzyme catalyses a D-aminoacyl-tRNA + H2O = a tRNA + a D-alpha-amino acid + H(+). Its function is as follows. An aminoacyl-tRNA editing enzyme that deacylates mischarged D-aminoacyl-tRNAs. Also deacylates mischarged glycyl-tRNA(Ala), protecting cells against glycine mischarging by AlaRS. Acts via tRNA-based rather than protein-based catalysis; rejects L-amino acids rather than detecting D-amino acids in the active site. By recycling D-aminoacyl-tRNA to D-amino acids and free tRNA molecules, this enzyme counteracts the toxicity associated with the formation of D-aminoacyl-tRNA entities in vivo and helps enforce protein L-homochirality. This Legionella pneumophila (strain Paris) protein is D-aminoacyl-tRNA deacylase.